The primary structure comprises 215 residues: 3-isopropylmalate dehydratase small subunit (215 aa).

This sequence belongs to the LeuD family. LeuD type 1 subfamily. As to quaternary structure, heterodimer of LeuC and LeuD.

It carries out the reaction (2R,3S)-3-isopropylmalate = (2S)-2-isopropylmalate. It participates in amino-acid biosynthesis; L-leucine biosynthesis; L-leucine from 3-methyl-2-oxobutanoate: step 2/4. In terms of biological role, catalyzes the isomerization between 2-isopropylmalate and 3-isopropylmalate, via the formation of 2-isopropylmaleate. The chain is 3-isopropylmalate dehydratase small subunit from Ectopseudomonas mendocina (strain ymp) (Pseudomonas mendocina).